We begin with the raw amino-acid sequence, 364 residues long: Aminomethyltransferase (364 aa).

This sequence belongs to the GcvT family. As to quaternary structure, the glycine cleavage system is composed of four proteins: P, T, L and H.

It catalyses the reaction N(6)-[(R)-S(8)-aminomethyldihydrolipoyl]-L-lysyl-[protein] + (6S)-5,6,7,8-tetrahydrofolate = N(6)-[(R)-dihydrolipoyl]-L-lysyl-[protein] + (6R)-5,10-methylene-5,6,7,8-tetrahydrofolate + NH4(+). Its function is as follows. The glycine cleavage system catalyzes the degradation of glycine. In Salmonella paratyphi A (strain AKU_12601), this protein is Aminomethyltransferase.